A 124-amino-acid chain; its full sequence is Large ribosomal subunit protein bL12 (124 aa).

The protein belongs to the bacterial ribosomal protein bL12 family. As to quaternary structure, homodimer. Part of the ribosomal stalk of the 50S ribosomal subunit. Forms a multimeric L10(L12)X complex, where L10 forms an elongated spine to which 2 to 4 L12 dimers bind in a sequential fashion. Binds GTP-bound translation factors.

Functionally, forms part of the ribosomal stalk which helps the ribosome interact with GTP-bound translation factors. Is thus essential for accurate translation. The sequence is that of Large ribosomal subunit protein bL12 from Jannaschia sp. (strain CCS1).